Reading from the N-terminus, the 340-residue chain is L-threonine 3-dehydrogenase (340 aa).

C38 is a Zn(2+) binding site. Residues T40 and H43 each act as charge relay system in the active site. Positions 63, 64, 93, 96, 99, and 107 each coordinate Zn(2+). Residues I175, D195, R200, 262-264, and 286-287 contribute to the NAD(+) site; these read LGI and IY.

It belongs to the zinc-containing alcohol dehydrogenase family. In terms of assembly, homotetramer. Zn(2+) is required as a cofactor.

It is found in the cytoplasm. The enzyme catalyses L-threonine + NAD(+) = (2S)-2-amino-3-oxobutanoate + NADH + H(+). It participates in amino-acid degradation; L-threonine degradation via oxydo-reductase pathway; glycine from L-threonine: step 1/2. Catalyzes the NAD(+)-dependent oxidation of L-threonine to 2-amino-3-ketobutyrate. The protein is L-threonine 3-dehydrogenase of Pseudoalteromonas atlantica (strain T6c / ATCC BAA-1087).